The chain runs to 154 residues: Transcription antitermination protein NusB (154 aa).

A disordered region spans residues 132 to 154; sequence KDKQSPQSTPLDDSDKDESDQTN. Over residues 143–154 the composition is skewed to acidic residues; sequence DDSDKDESDQTN.

This sequence belongs to the NusB family.

Involved in transcription antitermination. Required for transcription of ribosomal RNA (rRNA) genes. Binds specifically to the boxA antiterminator sequence of the ribosomal RNA (rrn) operons. The polypeptide is Transcription antitermination protein NusB (Bifidobacterium animalis subsp. lactis (strain AD011)).